A 459-amino-acid chain; its full sequence is Autophagy-related protein 18 (459 aa).

WD repeat units follow at residues 1–39 and 188–228; these read MTSP…RIFS and AHRS…KLYQ. A necessary for proper localization to vacuole membrane region spans residues 229 to 232; sequence FRRG. A L/FRRG motif motif is present at residues 229-233; it reads FRRGT. A WD 3 repeat occupies 233 to 272; it reads TYPSTIYSMSFNLSSTLLCVSSTSDTIHIFRLGAPPGNTT. The disordered stretch occupies residues 264–339; it reads LGAPPGNTTP…RGSGSFSSML (76 aa). The span at 265–277 shows a compositional bias: low complexity; sequence GAPPGNTTPAGAP. Basic and acidic residues predominate over residues 285–296; it reads RQDRWSRARSYD. Over residues 319–330 the composition is skewed to gly residues; sequence PGAGNNQGGHTR. One copy of the WD 4 repeat lies at 393 to 433; that stretch reads APGGPLRSVVAMSSSSPQVMVVTSDGGFYVYNIDMEHGGEG.

It belongs to the WD repeat PROPPIN family. Component of the PI(3,5)P2 regulatory complex. Interacts with ATG2 and ATG9. The ATG2-ATG18 complex is essential for autophagosome formation.

The protein resides in the preautophagosomal structure membrane. The protein localises to the vacuole membrane. It is found in the endosome membrane. Its function is as follows. Component of the PI(3,5)P2 regulatory complex that regulates both the synthesis and turnover of phosphatidylinositol 3,5-bisphosphate (PtdIns(3,5)P2). Plays an important role in osmotically-induced vacuole fragmentation. Required for cytoplasm to vacuole transport (Cvt) vesicle formation, pexophagy and starvation-induced autophagy. Involved in correct ATG9 trafficking to the pre-autophagosomal structure. With ATG2, protects ATG8 from ATG4-mediated cleavage. Autophagy is required for proper vegetative growth, asexual/sexual reproduction, and full virulence. Autophagy is particularly involved in the biosynthesis of deoxynivalenol (DON), an important virulence determinant. This Gibberella zeae (strain ATCC MYA-4620 / CBS 123657 / FGSC 9075 / NRRL 31084 / PH-1) (Wheat head blight fungus) protein is Autophagy-related protein 18.